The primary structure comprises 231 residues: A-type ATP synthase subunit D (231 aa).

It belongs to the V-ATPase D subunit family. As to quaternary structure, has multiple subunits with at least A(3), B(3), C, D, E, F, H, I and proteolipid K(x).

Its subcellular location is the cell membrane. Functionally, component of the A-type ATP synthase that produces ATP from ADP in the presence of a proton gradient across the membrane. The polypeptide is A-type ATP synthase subunit D (Methanobrevibacter smithii (strain ATCC 35061 / DSM 861 / OCM 144 / PS)).